Here is a 300-residue protein sequence, read N- to C-terminus: NAD kinase (300 aa).

Asp75 functions as the Proton acceptor in the catalytic mechanism. NAD(+)-binding positions include Asp75–Gly76, Asn149–Asp150, Arg177, Asp179, Thr190–Ser195, Ala214, and Gln248.

It belongs to the NAD kinase family. A divalent metal cation is required as a cofactor.

The protein resides in the cytoplasm. It carries out the reaction NAD(+) + ATP = ADP + NADP(+) + H(+). Functionally, involved in the regulation of the intracellular balance of NAD and NADP, and is a key enzyme in the biosynthesis of NADP. Catalyzes specifically the phosphorylation on 2'-hydroxyl of the adenosine moiety of NAD to yield NADP. This chain is NAD kinase, found in Burkholderia orbicola (strain MC0-3).